The sequence spans 148 residues: Glycine cleavage system H protein 5 (148 aa).

The 83-residue stretch at 33-115 (VFTIGLTSVA…YGQGWIAKVK (83 aa)) folds into the Lipoyl-binding domain. K74 bears the N6-lipoyllysine mark.

It belongs to the GcvH family. The glycine cleavage system is composed of four proteins: P, T, L and H. Requires (R)-lipoate as cofactor.

The glycine cleavage system catalyzes the degradation of glycine. The H protein shuttles the methylamine group of glycine from the P protein to the T protein. The protein is Glycine cleavage system H protein 5 of Aquifex aeolicus (strain VF5).